The primary structure comprises 548 residues: Solute carrier family 22 member 7 (548 aa).

The chain crosses the membrane as a helical span at residues 21-41 (VALLALPRVLLPLHFLLPIFL). Residue Asn-91 is glycosylated (N-linked (GlcNAc...) asparagine). 11 consecutive transmembrane segments (helical) span residues 146–166 (AAST…GYLS), 180–200 (VSTL…MFAI), 204–224 (LTGS…LEWL), 234–254 (VLSS…GYLI), 259–279 (WLLL…WWVP), 346–366 (ISLC…GLSL), 376–397 (YQTQ…YLSV), 404–423 (LTQA…RLLV), 432–452 (TVLA…AYLF), 466–486 (MGLT…AALL), and 493–513 (LPKL…LLLP). The active-site Important for glutamate counteranion efflux is the Phe-441. Residues 522–548 (ETIQDVERKSAPTSLQEEEMPMKQVQN) are disordered.

It belongs to the major facilitator (TC 2.A.1) superfamily. Organic cation transporter (TC 2.A.1.19) family. Mainly expressed in liver and kidney. In kidney, expressed in proximal tubular cells. Also expressed in pancreas, small intestine, spinal cord, lung, brain and heart. Expressed in fetal liver.

It is found in the basolateral cell membrane. It localises to the apical cell membrane. The protein localises to the cell membrane. The protein resides in the cytoplasm. Its subcellular location is the cytosol. It catalyses the reaction orotate(out) + L-glutamate(in) = orotate(in) + L-glutamate(out). It carries out the reaction 3',5'-cyclic GMP(in) = 3',5'-cyclic GMP(out). The enzyme catalyses GMP(in) = GMP(out). The catalysed reaction is 2'-deoxyguanosine(in) = 2'-deoxyguanosine(out). It catalyses the reaction GDP(in) = GDP(out). It carries out the reaction guanosine(in) = guanosine(out). The enzyme catalyses GTP(in) = GTP(out). The catalysed reaction is 3',5'-cyclic AMP(in) = 3',5'-cyclic AMP(out). It catalyses the reaction creatinine(in) = creatinine(out). It carries out the reaction prostaglandin E2(out) = prostaglandin E2(in). The enzyme catalyses 2-oxoglutarate(in) = 2-oxoglutarate(out). The catalysed reaction is glutarate(in) = glutarate(out). It catalyses the reaction urate(out) = urate(in). It carries out the reaction estrone 3-sulfate(out) = estrone 3-sulfate(in). The enzyme catalyses prostaglandin F2alpha(out) = prostaglandin F2alpha(in). Functionally, functions as a Na(+)-independent bidirectional multispecific transporter. Contributes to the renal and hepatic elimination of endogenous organic compounds from the systemic circulation into the urine and bile, respectively. Capable of transporting a wide range of purine and pyrimidine nucleobases, nucleosides and nucleotides, with cGMP, 2'deoxyguanosine and GMP being the preferred substrates. Functions as a pH- and chloride-independent cGMP bidirectional facilitative transporter that can regulate both intracellular and extracellular levels of cGMP and may be involved in cGMP signaling pathways. Mediates orotate/glutamate bidirectional exchange and most likely display a physiological role in hepatic release of glutamate into the blood. Involved in renal secretion and possible reabsorption of creatinine. Able to uptake prostaglandin E2 (PGE2) and may contribute to PGE2 renal excretion. Also transports alpha-ketoglutarate and urate. Apart from the orotate/glutamate exchange, the counterions for the uptake of other SLC22A7/OAT2 substrates remain to be identified. Non functional transporter. In terms of biological role, involved in the uptake of prostaglandin F2-alpha (PGF2-alpha). The chain is Solute carrier family 22 member 7 from Homo sapiens (Human).